A 442-amino-acid chain; its full sequence is Protein PRRC1-B (442 aa).

A disordered region spans residues 1–24 (MMEESGIETTPPSTPPPSTIGTSV).

It belongs to the PRRC1 family.

The protein localises to the golgi apparatus. The protein is Protein PRRC1-B (prrc1-b) of Xenopus laevis (African clawed frog).